A 516-amino-acid chain; its full sequence is Putative GTP-binding protein 6 (516 aa).

Residues 18–39 (GRGRSAPRAAAPSCPARALAAV) show a composition bias toward low complexity. The segment at 18–82 (GRGRSAPRAA…PEDADENAEE (65 aa)) is disordered. The segment covering 57-67 (LRADGGRSRTG) has biased composition (basic and acidic residues). Acidic residues predominate over residues 68–82 (DDEEEPEDADENAEE). A Hflx-type G domain is found at 295–459 (PVISVVGYTN…ELDAAVLKAT (165 aa)). GTP-binding positions include 301–308 (GYTNCGKT), 327–331 (FATLD), 349–352 (DTIG), 418–421 (NKVD), and 437–439 (SAL). Mg(2+) is bound by residues threonine 308 and threonine 329.

It belongs to the TRAFAC class OBG-HflX-like GTPase superfamily. HflX GTPase family. Mg(2+) is required as a cofactor. Ubiquitously expressed.

In Homo sapiens (Human), this protein is Putative GTP-binding protein 6 (GTPBP6).